A 128-amino-acid chain; its full sequence is Large ribosomal subunit protein bL17 (128 aa).

It belongs to the bacterial ribosomal protein bL17 family. Part of the 50S ribosomal subunit. Contacts protein L32.

This chain is Large ribosomal subunit protein bL17, found in Streptococcus sanguinis (strain SK36).